A 564-amino-acid polypeptide reads, in one-letter code: Large neutral amino acids transporter small subunit 3 (564 aa).

The helical transmembrane segment at 20 to 40 threads the bilayer; the sequence is VVENLFFSAVLLGWASLLIML. 2 N-linked (GlcNAc...) asparagine glycosylation sites follow: N54 and N57. Transmembrane regions (helical) follow at residues 78 to 98, 105 to 124, 131 to 151, 165 to 185, and 191 to 211; these read LGFTIGSFLLSATTLPLGILM, PLRLVGSACFAASCTLMALA, LSPLIFLALSLNGFAGICLTF, STFMALMIGSYASSAITFPGI, and AGVPFTVIMFTWSGLACLIFL. A phosphoserine mark is found at S262 and S267. Transmembrane regions (helical) follow at residues 303 to 323 and 357 to 377; these read IFLWSLVTMGMTQLRVIFYMG and SIFGVMQLLCLLTCPLIGYIM. N-linked (GlcNAc...) asparagine glycosylation is present at N396. S398 carries the post-translational modification Phosphoserine. 4 consecutive transmembrane segments (helical) span residues 424–444, 451–471, 490–510, and 515–535; these read AINAFTLTNILLVGFGIACLI, LLAFVLHTIVRGFFHSACGGL, LISAVFALLQQLLFMAMVGPL, and FWVNLGLLLLSFLGFLLPSYL. An N-linked (GlcNAc...) asparagine glycan is attached at N558.

Belongs to the SLC43A transporter (TC 2.A.1.44) family. Expressed in the kidney cortex as well as liver, pancreas, and skeletal muscle. In kidney expressed in the glomerular tuft (at protein level). Expressed in liver, skeletal muscle and pancreas (at protein level).

The protein resides in the cell membrane. Its subcellular location is the apical cell membrane. The protein localises to the endoplasmic reticulum membrane. It carries out the reaction D-leucine(in) = D-leucine(out). It catalyses the reaction L-leucine(in) = L-leucine(out). The enzyme catalyses L-isoleucine(in) = L-isoleucine(out). The catalysed reaction is L-methionine(in) = L-methionine(out). It carries out the reaction L-phenylalanine(in) = L-phenylalanine(out). It catalyses the reaction L-valine(in) = L-valine(out). Its function is as follows. Uniport that mediates the transport of neutral amino acids such as L-leucine, L-isoleucine, L-valine, and L-phenylalanine. The transport activity is sodium ions-independent, electroneutral and mediated by a facilitated diffusion. The sequence is that of Large neutral amino acids transporter small subunit 3 from Mus musculus (Mouse).